The following is a 1529-amino-acid chain: DNA-directed RNA polymerase subunit beta' (1529 aa).

Positions 156, 158, 183, and 186 each coordinate Zn(2+). The Mg(2+) site is built by D1328, D1330, and D1332.

Belongs to the RNA polymerase beta' chain family. RpoC1 subfamily. In terms of assembly, in plastids the minimal PEP RNA polymerase catalytic core is composed of four subunits: alpha, beta, beta', and beta''. When a (nuclear-encoded) sigma factor is associated with the core the holoenzyme is formed, which can initiate transcription. It depends on Mg(2+) as a cofactor. Zn(2+) is required as a cofactor.

It is found in the plastid. The protein localises to the chloroplast. It carries out the reaction RNA(n) + a ribonucleoside 5'-triphosphate = RNA(n+1) + diphosphate. Functionally, DNA-dependent RNA polymerase catalyzes the transcription of DNA into RNA using the four ribonucleoside triphosphates as substrates. The protein is DNA-directed RNA polymerase subunit beta' of Tetradesmus obliquus (Green alga).